The chain runs to 474 residues: GTPase Der (474 aa).

2 consecutive EngA-type G domains span residues 3–167 (LTIA…GSER) and 204–379 (IRIA…RVWN). GTP-binding positions include 9–16 (GRPNVGKS), 56–60 (DTAGL), 119–122 (NKSE), 210–217 (GRPNTGKS), 257–261 (DTAGL), and 322–325 (NKWD). Positions 380 to 464 (RRISTAKLNQ…PVRLSLRASD (85 aa)) constitute a KH-like domain.

This sequence belongs to the TRAFAC class TrmE-Era-EngA-EngB-Septin-like GTPase superfamily. EngA (Der) GTPase family. In terms of assembly, associates with the 50S ribosomal subunit.

GTPase that plays an essential role in the late steps of ribosome biogenesis. The chain is GTPase Der from Bartonella tribocorum (strain CIP 105476 / IBS 506).